Consider the following 249-residue polypeptide: 3-deoxy-manno-octulosonate cytidylyltransferase (249 aa).

The protein belongs to the KdsB family.

It is found in the cytoplasm. It catalyses the reaction 3-deoxy-alpha-D-manno-oct-2-ulosonate + CTP = CMP-3-deoxy-beta-D-manno-octulosonate + diphosphate. Its pathway is nucleotide-sugar biosynthesis; CMP-3-deoxy-D-manno-octulosonate biosynthesis; CMP-3-deoxy-D-manno-octulosonate from 3-deoxy-D-manno-octulosonate and CTP: step 1/1. It participates in bacterial outer membrane biogenesis; lipopolysaccharide biosynthesis. Functionally, activates KDO (a required 8-carbon sugar) for incorporation into bacterial lipopolysaccharide in Gram-negative bacteria. The chain is 3-deoxy-manno-octulosonate cytidylyltransferase from Brucella anthropi (strain ATCC 49188 / DSM 6882 / CCUG 24695 / JCM 21032 / LMG 3331 / NBRC 15819 / NCTC 12168 / Alc 37) (Ochrobactrum anthropi).